Here is a 497-residue protein sequence, read N- to C-terminus: MAAATAPQGWQWGEPRALGRAVKLLQRLEEQCRDLRLFVGPPSLRDLLPRTAQLLREVAKARSDKTRGDPEGPGGAGDFLVIYLTNLEAKGRQVAELLPHRGKKDANQDVFPEGSRFRRQLAKLALIFSHMHAELSALFPEGKYCGHLYQITKGSANTFWRENCGVRCVLPWAEFQSLLCSCHPVEPGPIMQALRSTLDLTCSGHVSVFEFDIFTRLFQPWPTLLKNWQLLAVNHPGYMAFLTYDEVQTRLQAYRDKPGSYIFRPSCTRLGQWAIGYVSSNGSILQTIPLNKPLLQVLLKGQKDGIFLYPDGKNHNPDLTELCRAVLNQCIQVSQEQLQLYQAMNSTFELCKICTERDKDVRIEPCGHLLCSCCLAAWQHSDSQTCPFCRCEIKGREAVSICQAQERSMEVRTTAGDSGDNCHQEAAEWKLESVTPSAPPLPPEVPCPQRPQNKGWLTLAPFTLPRLRPPLPLPKMASVLWEVTSRPQVREGATESS.

A 4H region spans residues Pro-7–Cys-145. A Cbl-PTB domain is found at Pro-7–Glu-321. The tract at residues Gly-146–Phe-218 is EF-hand-like. Ca(2+)-binding residues include Asp-199, Thr-201, and Glu-210. Residues Gln-219–Glu-321 are SH2-like. Arg-264 contributes to the 4-O-phospho-L-tyrosine binding site. The interval Leu-322 to Leu-350 is linker. Position 341 is a phosphotyrosine; by SRC (Tyr-341). The RING-type zinc finger occupies Cys-351 to Arg-390. An interaction with RET region spans residues Cys-351–Ser-497.

Interacts with Ubiquitin-conjugating enzyme E2 UBE2D2 and UBE2D3. Interacts with EGFR (tyrosine phosphorylated). Interacts with the SH3 domain proteins LYN and CRK. Interacts (via RING-type zinc finger) with TGFB1I1 (via LIM zinc-binding domain 2); the interaction is direct and enhances the E3 activity. Interacts directly with RET (inactive) and CD2AP; dissociates from RET upon RET activation by GDNF which also increases the interaction with CD2AP suggesting dissociation as CBLC:CD2AP complex. Interacts with SRC; the interaction is enhanced when SRC is phosphorylated at 'Tyr-419'. Post-translationally, phosphorylated on multiple tyrosine residues by SRC. In terms of processing, autoubiquitinated, when phosphorylated at Tyr-341.

The catalysed reaction is S-ubiquitinyl-[E2 ubiquitin-conjugating enzyme]-L-cysteine + [acceptor protein]-L-lysine = [E2 ubiquitin-conjugating enzyme]-L-cysteine + N(6)-ubiquitinyl-[acceptor protein]-L-lysine.. With respect to regulation, phosphorylation at Tyr-341 is necessary and sufficient for the activation of E3 activity. Its function is as follows. Acts as an E3 ubiquitin-protein ligase, which accepts ubiquitin from specific E2 ubiquitin-conjugating enzymes, and then transfers it to substrates promoting their degradation by the proteasome. Functionally coupled with the E2 ubiquitin-protein ligases UB2D1, UB2D2 and UB2D3. Regulator of EGFR mediated signal transduction; upon EGF activation, ubiquitinates EGFR. Inhibits EGF stimulated MAPK1 activation. Promotes ubiquitination of SRC phosphorylated at 'Tyr-419', has the highest ubiquitin ligase activity among CBL family proteins. In collaboration with CD2AP may act as regulatory checkpoint for Ret signaling by modulating the rate of RET degradation after ligand activation; CD2AP converts it from an inhibitor to a promoter of RET degradation; the function limits the potency of GDNF on neuronal survival. This chain is E3 ubiquitin-protein ligase CBL-C (Cblc), found in Rattus norvegicus (Rat).